A 78-amino-acid chain; its full sequence is Broad mercury transporter MerE (78 aa).

2 consecutive transmembrane segments (helical) span residues leucine 19 to leucine 39 and phenylalanine 47 to valine 67.

It localises to the cell inner membrane. Functionally, broad mercury transporter that mediates the transport of both CH(3)Hg(I) and Hg(II) across the membrane. The sequence is that of Broad mercury transporter MerE from Shigella flexneri.